The sequence spans 210 residues: Thymidylate kinase (210 aa).

An ATP-binding site is contributed by 10–17 (GPEGAGKS).

It belongs to the thymidylate kinase family.

It catalyses the reaction dTMP + ATP = dTDP + ADP. Phosphorylation of dTMP to form dTDP in both de novo and salvage pathways of dTTP synthesis. This chain is Thymidylate kinase, found in Pseudomonas aeruginosa (strain UCBPP-PA14).